The chain runs to 100 residues: Urease subunit gamma (100 aa).

It belongs to the urease gamma subunit family. In terms of assembly, heterotrimer of UreA (gamma), UreB (beta) and UreC (alpha) subunits. Three heterotrimers associate to form the active enzyme.

The protein localises to the cytoplasm. It carries out the reaction urea + 2 H2O + H(+) = hydrogencarbonate + 2 NH4(+). Its pathway is nitrogen metabolism; urea degradation; CO(2) and NH(3) from urea (urease route): step 1/1. This Cupriavidus pinatubonensis (strain JMP 134 / LMG 1197) (Cupriavidus necator (strain JMP 134)) protein is Urease subunit gamma.